The following is a 488-amino-acid chain: Transcriptional coactivator YAP1 (488 aa).

A compositionally biased stretch (pro residues) spans 1 to 21; it reads MEPAQQPPPQPAPQGPAPPSV. Positions 1–47 are disordered; it reads MEPAQQPPPQPAPQGPAPPSVSPAGTPAAPPAPPAGHQVVHVRGDSE. Phosphoserine is present on Ser46. Thr48 bears the Phosphothreonine mark. Residues 71–85 adopt a coiled-coil conformation; that stretch reads MRLRKLPDSFFKPPE. Residue Lys75 is modified to N6-lactoyllysine. The segment at 76-99 is disordered; it reads LPDSFFKPPEPKSHSRQASTDAGT. Phosphoserine is present on residues Ser90 and Ser94. Position 95 is a phosphothreonine (Thr95). At Thr104 the chain carries Phosphothreonine; by MAPK8 and MAPK9. Ser112, Ser113, Ser116, and Ser123 each carry phosphoserine. Position 149 is a phosphoserine; by LATS1 and LATS2 (Ser149). 2 consecutive WW domains span residues 156-189 and 215-248; these read VPLP…DPRK and GPLP…DPRL. 2 disordered regions span residues 261–293 and 339–393; these read SAPV…QIQL and TLEQ…SSYS. The residue at position 274 (Ser274) is a Phosphoserine. Residues 276–488 form a transactivation domain region; that stretch reads QGGVLGGGSS…LDKESFLTWL (213 aa). The stretch at 283 to 344 forms a coiled coil; it reads GSSNQQQQIQ…SQLPTLEQDG (62 aa). Residues 348-376 show a composition bias toward polar residues; it reads NAVSSPGMSQELRTMTTNSSDPFLNSGTY. Ser352 is modified (phosphoserine; by MAPK8 and MAPK9). 4 positions are modified to phosphoserine: Ser356, Ser366, Ser367, and Ser373. Ser382 carries the post-translational modification Phosphoserine; by LATS1 and LATS2. The segment covering 384–393 has biased composition (polar residues); the sequence is DSGLSMSSYS. 2 positions are modified to phosphoserine; by CK1: Ser385 and Ser388. Tyr392 carries the phosphotyrosine; by ABL1 modification. Thr397 is subject to Phosphothreonine; by MAPK8 and MAPK9.

The protein belongs to the YAP1 family. As to quaternary structure, part of a complex when phosphorylated that contains DSG3, PKP1, YAP1 and YWHAG; the complex is required for localization of DSG3 and YAP1 to the cell membrane in keratinocytes. Binds to the SH3 domain of the YES kinase. Binds to WBP1 and WBP2. Binds, in vitro, through the WW1 domain, to neural isoforms of ENAH that contain the PPSY motif. The phosphorylated form interacts with YWHAB. Interacts (via WW domains) with LATS1 (via PPxY motif 2). Interacts with LATS2. Interacts (via WW domain 1) with isoform JM-A of ERBB4 (via PPxY motif 2). Interacts with TEAD1, TEAD2 and TEAD3. Interacts with TP73 and HCK. Interacts with RUNX1. Interacts with TEAD4. Interacts (via WW domains) with PTPN14 (via PPxY motif 2); this interaction leads to the cytoplasmic sequestration of YAP1 and inhibits its transcriptional coactivator activity. Interacts (when phosphorylated at Ser-112) with SMAD2, SMAD3 and WWTR1. Interacts with PRRG2 (via cytoplasmic domain). Interacts (via WW domains) with PRRG4 (via cytoplasmic domain). Interacts (phosphorylated) with CLDN18; the interaction sequesters YAP1 away from the nucleus and thereby restricts transcription of YAP1 target genes. Interacts with SMAD1. Interacts with AMOT; the interaction facilitates translocation of YAP1 to the cytoplasm and tight junctions. Interacts with AMOTL2, the interaction is required for ubiquitination of AMOTL2 and localization of YAP1 to tight junctions. In terms of processing, phosphorylated by LATS1 and LATS2; leading to cytoplasmic translocation and inactivation. Phosphorylated by ABL1; leading to YAP1 stabilization, enhanced interaction with TP73 and recruitment onto proapoptotic genes; in response to DNA damage. Phosphorylation at Ser-385 and Ser-388 by CK1 is triggered by previous phosphorylation at Ser-382 by LATS proteins and leads to YAP1 ubiquitination by SCF(beta-TRCP) E3 ubiquitin ligase and subsequent degradation. Phosphorylated at Thr-104, Ser-123, Ser-352 and Thr-397 by MAPK8/JNK1 and MAPK9/JNK2, which is required for the regulation of apoptosis by YAP1. Lactylation by AARS1 promotes nuclear localization and stabilization of YAP1, leading to increased Hippo signaling pathway. Delactylated by SIRT1. Post-translationally, ubiquitinated by SCF(beta-TRCP) E3 ubiquitin ligase. Isoforms lacking the transactivation domain seen in striatal neurons (at protein level). Ubiquitous. Isoform 2 is expressed at higher levels in the neural tissues. In the embryo, it is expressed in brain, eye, and the maxillary and frontonasal components of the primary palate.

Its subcellular location is the cytoplasm. It localises to the nucleus. The protein resides in the cell junction. It is found in the tight junction. The protein localises to the cell membrane. In terms of biological role, transcriptional regulator with dual roles as a coactivator and corepressor. Critical downstream regulatory target in the Hippo signaling pathway, crucial for organ size control and tumor suppression by restricting proliferation and promoting apoptosis. The Hippo signaling pathway core involves a kinase cascade featuring STK3/MST2 and STK4/MST1, along with its regulatory partner SAV1, which phosphorylates and activates LATS1/2 in complex with their regulatory protein, MOB1. This activation leads to the phosphorylation and inactivation of the YAP1 oncoprotein and WWTR1/TAZ. Phosphorylation of YAP1 by LATS1/2 prevents its nuclear translocation, thereby regulating the expression of its target genes. The transcriptional regulation of gene expression requires TEAD transcription factors and modulates cell growth, anchorage-independent growth, and induction of epithelial-mesenchymal transition (EMT). Plays a key role in tissue tension and 3D tissue shape by regulating the cortical actomyosin network, acting via ARHGAP18, a Rho GTPase activating protein that suppresses F-actin polymerization. It also suppresses ciliogenesis by acting as a transcriptional corepressor of TEAD4 target genes AURKA and PLK1. In conjunction with WWTR1, regulates TGFB1-dependent SMAD2 and SMAD3 nuclear accumulation. Synergizes with WBP2 to enhance PGR activity. In Mus musculus (Mouse), this protein is Transcriptional coactivator YAP1 (Yap1).